Consider the following 56-residue polypeptide: Small ribosomal subunit protein uS14 (56 aa).

S9 bears the Phosphoserine mark. R12 bears the Omega-N-methylarginine mark. Zn(2+)-binding residues include C21, C24, C39, and C42. K48 carries the N6-acetyllysine modification.

Belongs to the universal ribosomal protein uS14 family. In terms of assembly, component of the 40S small ribosomal subunit. Requires Zn(2+) as cofactor.

It localises to the cytoplasm. The protein localises to the cytosol. Its subcellular location is the rough endoplasmic reticulum. Functionally, component of the small ribosomal subunit. The ribosome is a large ribonucleoprotein complex responsible for the synthesis of proteins in the cell. The chain is Small ribosomal subunit protein uS14 (RPS29) from Sus scrofa (Pig).